The chain runs to 456 residues: MVIAYIRNLIRKVIQRGMDHEHSALYPPAAVRGMKVLDRSAFEQEVTLPALLVPVQSLRNCRKMMKSKLVNLSINKKVVDPPAHLVGEELTAGHKLFLLKPGTTMETYSSDEKQMLGKLGVKDKIYDYRITLGYENYKHWDVLRAILPDSEMAARGFSQVGHILHVNLRDHQLPYKHIIGQVLLDKIQTARTVVNKHQNIDNKFRNFEMEVIAGENNFVTRIIEHGRKFEFDFSKVFWNSRLSTEHQRITNFVSESDVVFDVFAGVGPFAIPIAKKGCVVYANDLNPESYRWLLHNVALNKTKAKCFNSDGREFIQTELRNYLLTRSPHKVHVLMNLPAIAVEFLDVFRGLLCNGDCLAANDLSNASHKKLLSIPEVCVHLYIFAPEKDGIADLKSRIKQSLGCALPEDAVIYNVRNVAPKKQMYCVSFVLSQHWMDQKEQDVYEPAPKKIKECIS.

S-adenosyl-L-methionine is bound by residues histidine 246, 284–285 (DL), 310–311 (DG), and asparagine 336.

This sequence belongs to the class I-like SAM-binding methyltransferase superfamily. TRM5/TYW2 family. Monomer.

Its subcellular location is the mitochondrion matrix. The protein resides in the nucleus. It localises to the cytoplasm. It carries out the reaction guanosine(37) in tRNA + S-adenosyl-L-methionine = N(1)-methylguanosine(37) in tRNA + S-adenosyl-L-homocysteine + H(+). Specifically methylates the N1 position of guanosine-37 in various cytoplasmic and mitochondrial tRNAs. Methylation is not dependent on the nature of the nucleoside 5' of the target nucleoside. This is the first step in the biosynthesis of wybutosine (yW), a modified base adjacent to the anticodon of tRNAs and required for accurate decoding. The sequence is that of tRNA (guanine(37)-N(1))-methyltransferase from Ciona intestinalis (Transparent sea squirt).